The sequence spans 152 residues: Small ribosomal subunit protein uS15 (152 aa).

A compositionally biased stretch (basic residues) spans 1-10; the sequence is MAKMHTRTKG. A disordered region spans residues 1-26; that stretch reads MAKMHTRTKGKSGSTKPIRSESPAWS. The segment covering 11–26 has biased composition (polar residues); sequence KSGSTKPIRSESPAWS.

It belongs to the universal ribosomal protein uS15 family. In terms of assembly, part of the 30S ribosomal subunit.

The protein is Small ribosomal subunit protein uS15 of Methanococcoides burtonii (strain DSM 6242 / NBRC 107633 / OCM 468 / ACE-M).